The sequence spans 194 residues: FMN-dependent NADH:quinone oxidoreductase (194 aa).

FMN is bound by residues Ser-9, 15-17, and 85-88; these read SIS and MYNF.

The protein belongs to the azoreductase type 1 family. Homodimer. FMN serves as cofactor.

The catalysed reaction is 2 a quinone + NADH + H(+) = 2 a 1,4-benzosemiquinone + NAD(+). It carries out the reaction N,N-dimethyl-1,4-phenylenediamine + anthranilate + 2 NAD(+) = 2-(4-dimethylaminophenyl)diazenylbenzoate + 2 NADH + 2 H(+). In terms of biological role, quinone reductase that provides resistance to thiol-specific stress caused by electrophilic quinones. Functionally, also exhibits azoreductase activity. Catalyzes the reductive cleavage of the azo bond in aromatic azo compounds to the corresponding amines. The protein is FMN-dependent NADH:quinone oxidoreductase of Xanthomonas oryzae pv. oryzae (strain KACC10331 / KXO85).